The following is a 377-amino-acid chain: MADNSHTRVVVGMSGGVDSSVTALLLKRQGYDVVGVFMKNWDDTDENGVCTATEDYKDVAKVASKIGIPYYSVNFEKEYWDRVFKYFIAEYKKGRTPNPDVICNKEIKFKAFIEYANQLGADYVATGHYADVKRDENGRMHLMRAKDQHKDQTYFLSQLDYKQLDKVMFPLAGYTKPEIRKIAEEAGLATADKKDSVGICFIGEDGHFREFLSQYIPAQPGNMETLDGKVVGQHMGLMYYTIGQRRGLGLGGNKESNEPWFVIGKDMKKNVLYVGQGYENSHLYATHLEASDIHWVDDVVSRYGRDFHCTAKFRYRQTDVGVTVHLSDDDQMVTVEFDDPARAITPGQAVVFYDGEECLGSAIIDRAYSHDRQLQYV.

ATP contacts are provided by residues 12–19 (GMSGGVDS) and M38. Positions 98-100 (NPD) are interaction with target base in tRNA. C103 acts as the Nucleophile in catalysis. C103 and C200 are joined by a disulfide. G127 serves as a coordination point for ATP. An interaction with tRNA region spans residues 150 to 152 (KDQ). C200 (cysteine persulfide intermediate) is an active-site residue. Residues 314-315 (RY) are interaction with tRNA.

The protein belongs to the MnmA/TRMU family.

The protein localises to the cytoplasm. It carries out the reaction S-sulfanyl-L-cysteinyl-[protein] + uridine(34) in tRNA + AH2 + ATP = 2-thiouridine(34) in tRNA + L-cysteinyl-[protein] + A + AMP + diphosphate + H(+). Catalyzes the 2-thiolation of uridine at the wobble position (U34) of tRNA, leading to the formation of s(2)U34. This chain is tRNA-specific 2-thiouridylase MnmA, found in Limosilactobacillus reuteri (strain DSM 20016) (Lactobacillus reuteri).